A 595-amino-acid chain; its full sequence is MKNIRNFCIIAHIDHGKSTLADRLLEYTNTVSGKDLQDQVLDNMDLERERGITIKSHAIQMDYEMDGEKYVLNLIDTPGHVDFSYEVSRSIAACEGALLIVDAAQGIQAQTISNLYMAIENDLTIIPIVNKVDLPSAMPEEVEDQIIELLGCDRSEIIRASGKTGQGVDQILRAIVEQVPAPAGDPDAPLQCLIFDSVFNPFRGIIAYFKVVNGSIRKGDHVKFIATEKEYDADEVGVLRLDMEPRSEVKTGDVGYIISGIKTSREVKVGDTITHVAKPAKEAIAGFEEVKPMVFAGVYPIEAEDFENLRASLEKLQLNDASLTFQPESSVALGFGFRCGFLGLLHMEIVQERLDREFNMNVITTVPNVSYKVYDKKGGCKEVHNPSGLLEPTLIDHIEEPFIRASVITNTAYIGPIMTLCLGKRGVLVKQEYISGDRVEIFYDLPLGEIVIDFYDKLKSISKGYASFDYHLHDFRESKLVKLDILLNGEPVDALSTLTHVDNSVTFGRRMCEKLKELIPRQQFEIAIQAAIGAKIIARETIKPVRKDVTAKCYGGDISRKRKLLEKQKEGKKRMKQIGTVEVPQKAFLAVLKLD.

The 182-residue stretch at 2-183 (KNIRNFCIIA…AIVEQVPAPA (182 aa)) folds into the tr-type G domain. Residues 14 to 19 (DHGKST) and 130 to 133 (NKVD) contribute to the GTP site.

The protein belongs to the TRAFAC class translation factor GTPase superfamily. Classic translation factor GTPase family. LepA subfamily.

Its subcellular location is the cell inner membrane. The enzyme catalyses GTP + H2O = GDP + phosphate + H(+). Functionally, required for accurate and efficient protein synthesis under certain stress conditions. May act as a fidelity factor of the translation reaction, by catalyzing a one-codon backward translocation of tRNAs on improperly translocated ribosomes. Back-translocation proceeds from a post-translocation (POST) complex to a pre-translocation (PRE) complex, thus giving elongation factor G a second chance to translocate the tRNAs correctly. Binds to ribosomes in a GTP-dependent manner. The sequence is that of Elongation factor 4 from Porphyromonas gingivalis (strain ATCC BAA-308 / W83).